Here is a 407-residue protein sequence, read N- to C-terminus: Geranylgeranyl diphosphate reductase (407 aa).

This sequence belongs to the geranylgeranyl reductase family. ChlP subfamily.

It catalyses the reaction phytyl diphosphate + 3 NADP(+) = geranylgeranyl diphosphate + 3 NADPH + 3 H(+). The protein operates within porphyrin-containing compound metabolism; chlorophyll biosynthesis. Catalyzes the stepwise hydrogenation of geranylgeraniol to phytol during chlorophyll A (ChlA) biosynthesis. This Synechocystis sp. (strain ATCC 27184 / PCC 6803 / Kazusa) protein is Geranylgeranyl diphosphate reductase (chlP).